The following is a 209-amino-acid chain: tRNA (guanine-N(7)-)-methyltransferase (209 aa).

Positions 40, 65, and 114 each coordinate S-adenosyl-L-methionine. Aspartate 114 is a catalytic residue. Substrate is bound by residues aspartate 150 and 188 to 191 (TAFE).

The protein belongs to the class I-like SAM-binding methyltransferase superfamily. TrmB family.

It catalyses the reaction guanosine(46) in tRNA + S-adenosyl-L-methionine = N(7)-methylguanosine(46) in tRNA + S-adenosyl-L-homocysteine. Its pathway is tRNA modification; N(7)-methylguanine-tRNA biosynthesis. Its function is as follows. Catalyzes the formation of N(7)-methylguanine at position 46 (m7G46) in tRNA. In Bdellovibrio bacteriovorus (strain ATCC 15356 / DSM 50701 / NCIMB 9529 / HD100), this protein is tRNA (guanine-N(7)-)-methyltransferase.